The chain runs to 154 residues: SsrA-binding protein (154 aa).

It belongs to the SmpB family.

The protein localises to the cytoplasm. Functionally, required for rescue of stalled ribosomes mediated by trans-translation. Binds to transfer-messenger RNA (tmRNA), required for stable association of tmRNA with ribosomes. tmRNA and SmpB together mimic tRNA shape, replacing the anticodon stem-loop with SmpB. tmRNA is encoded by the ssrA gene; the 2 termini fold to resemble tRNA(Ala) and it encodes a 'tag peptide', a short internal open reading frame. During trans-translation Ala-aminoacylated tmRNA acts like a tRNA, entering the A-site of stalled ribosomes, displacing the stalled mRNA. The ribosome then switches to translate the ORF on the tmRNA; the nascent peptide is terminated with the 'tag peptide' encoded by the tmRNA and targeted for degradation. The ribosome is freed to recommence translation, which seems to be the essential function of trans-translation. In Streptococcus thermophilus (strain CNRZ 1066), this protein is SsrA-binding protein.